Here is a 437-residue protein sequence, read N- to C-terminus: Transcription factor ets-4 (437 aa).

The interval 1 to 30 (MNGTGSVGHRWNSLSPEPHSGTESTASTPF) is disordered. Residues 21 to 30 (GTESTASTPF) are compositionally biased toward polar residues. A Glycyl lysine isopeptide (Lys-Gly) (interchain with G-Cter in SUMO) cross-link involves residue Lys32. Ser73 carries the phosphoserine modification. Lys83 is covalently cross-linked (Glycyl lysine isopeptide (Lys-Gly) (interchain with G-Cter in SUMO)). A PNT domain is found at 120 to 202 (HLIQDISTTC…AQLQVWKTGT (83 aa)). The interval 275–302 (QGTVLPSPSNSDTSSNGSSQDMNDDDID) is disordered. A compositionally biased stretch (low complexity) spans 280–293 (PSPSNSDTSSNGSS). Residues 349–432 (VHLWQFIREL…KKQRLVYKFL (84 aa)) constitute a DNA-binding region (ETS).

The protein belongs to the ETS family. As to quaternary structure, may interact with cebp-1. May interact with tdpt-1 to facilitate its sumoylation. Phosphorylation is required for axon regeneration. In terms of processing, sumoylated; sumoylation inhibits phosphorylation, which is required for probable interaction with cebp-1 and consequently the expression of svh-2. In terms of tissue distribution, expressed in cells of the anterior and posterior bulbs of the pharynx, seam cells, a few unidentified cells of the vulva, the hypodermis, several unidentified neurons, labial socket cells of the head and rectal cells.

It localises to the nucleus. In terms of biological role, transcription factor which binds to 5'-GGAA/T-3' DNA consensus sequences. Both positively and negatively regulates the expression of target genes. Plays a role in the regulation of adult lifespan, which may in part be through modulation of daf-16 activity. Regulates the expression of genes such as svh-2 in response to axon injury and in addition, may function downstream of the cAMP signaling pathway to promote axon regeneration. Regulates the expression of lipid metabolism genes and may also control the expression of the RNA-binding protein rege-1 which too has been implicated in the control of fat accumulation. This chain is Transcription factor ets-4, found in Caenorhabditis elegans.